Reading from the N-terminus, the 447-residue chain is Serine/threonine-protein phosphatase 2A 55 kDa regulatory subunit B gamma isoform (447 aa).

WD repeat units follow at residues 22–61 (TEAD…KNAP), 87–128 (EIEE…KRPE), 171–209 (GHTY…RSFN), 220–260 (DLTE…LCDK), 279–317 (EIIS…RPIE), 334–375 (ESDC…DVTL), and 410–446 (DFTK…NSDM).

The protein belongs to the phosphatase 2A regulatory subunit B family. In terms of assembly, PP2A consists of a common heterodimeric core enzyme, composed of a 36 kDa catalytic subunit (subunit C) and a 65 kDa constant regulatory subunit (PR65 or subunit A), that associates with a variety of regulatory subunits. Proteins that associate with the core dimer include three families of regulatory subunits B (the R2/B/PR55/B55, R3/B''/PR72/PR130/PR59 and R5/B'/B56 families), the 48 kDa variable regulatory subunit, viral proteins, and cell signaling molecules. Interacts with IER5. As to expression, highly expressed in brain.

Its function is as follows. The B regulatory subunit might modulate substrate selectivity and catalytic activity, and might also direct the localization of the catalytic enzyme to a particular subcellular compartment. The polypeptide is Serine/threonine-protein phosphatase 2A 55 kDa regulatory subunit B gamma isoform (Ppp2r2c) (Rattus norvegicus (Rat)).